Reading from the N-terminus, the 177-residue chain is Large ribosomal subunit protein uL6 (177 aa).

This sequence belongs to the universal ribosomal protein uL6 family. In terms of assembly, part of the 50S ribosomal subunit.

Its function is as follows. This protein binds to the 23S rRNA, and is important in its secondary structure. It is located near the subunit interface in the base of the L7/L12 stalk, and near the tRNA binding site of the peptidyltransferase center. The protein is Large ribosomal subunit protein uL6 of Haemophilus ducreyi (strain 35000HP / ATCC 700724).